The primary structure comprises 80 residues: NADH-ubiquinone oxidoreductase chain 5 (80 aa).

Transmembrane regions (helical) follow at residues 4 to 24 (ISFL…LNFM) and 44 to 64 (IVMT…VLLI).

It belongs to the complex I subunit 5 family.

The protein localises to the mitochondrion inner membrane. The enzyme catalyses a ubiquinone + NADH + 5 H(+)(in) = a ubiquinol + NAD(+) + 4 H(+)(out). Core subunit of the mitochondrial membrane respiratory chain NADH dehydrogenase (Complex I) that is believed to belong to the minimal assembly required for catalysis. Complex I functions in the transfer of electrons from NADH to the respiratory chain. The immediate electron acceptor for the enzyme is believed to be ubiquinone. This chain is NADH-ubiquinone oxidoreductase chain 5 (ND5), found in Ceratitis capitata (Mediterranean fruit fly).